Here is a 667-residue protein sequence, read N- to C-terminus: 1-deoxy-D-xylulose-5-phosphate synthase (667 aa).

Thiamine diphosphate-binding positions include H73 and 113 to 115 (SHA). D145 lines the Mg(2+) pocket. Thiamine diphosphate is bound by residues 146-147 (GA), N175, Y297, and E379. N175 provides a ligand contact to Mg(2+).

Belongs to the transketolase family. DXPS subfamily. As to quaternary structure, homodimer. It depends on Mg(2+) as a cofactor. Requires thiamine diphosphate as cofactor.

It carries out the reaction D-glyceraldehyde 3-phosphate + pyruvate + H(+) = 1-deoxy-D-xylulose 5-phosphate + CO2. It functions in the pathway metabolic intermediate biosynthesis; 1-deoxy-D-xylulose 5-phosphate biosynthesis; 1-deoxy-D-xylulose 5-phosphate from D-glyceraldehyde 3-phosphate and pyruvate: step 1/1. Its function is as follows. Catalyzes the acyloin condensation reaction between C atoms 2 and 3 of pyruvate and glyceraldehyde 3-phosphate to yield 1-deoxy-D-xylulose-5-phosphate (DXP). This Kocuria rhizophila (strain ATCC 9341 / DSM 348 / NBRC 103217 / DC2201) protein is 1-deoxy-D-xylulose-5-phosphate synthase.